A 345-amino-acid polypeptide reads, in one-letter code: Annexin A9 (345 aa).

Annexin repeat units follow at residues 41–112, 113–184, 197–266, and 270–341; these read FSAD…ALLQ, PAAH…ALAK, NLAA…NLAS, and NTPL…ALCR.

This sequence belongs to the annexin family. Homodimer.

In terms of biological role, may act as a low affinity receptor for acetylcholine. This Bos taurus (Bovine) protein is Annexin A9 (ANXA9).